The primary structure comprises 239 residues: Probable transcriptional regulatory protein Sca_0317 (239 aa).

Belongs to the TACO1 family. YeeN subfamily.

Its subcellular location is the cytoplasm. The polypeptide is Probable transcriptional regulatory protein Sca_0317 (Staphylococcus carnosus (strain TM300)).